We begin with the raw amino-acid sequence, 157 residues long: Cyclic pyranopterin monophosphate synthase (157 aa).

Substrate-binding positions include M74 to H76 and M112 to E113. Residue D127 is part of the active site.

Belongs to the MoaC family. Homohexamer; trimer of dimers.

It catalyses the reaction (8S)-3',8-cyclo-7,8-dihydroguanosine 5'-triphosphate = cyclic pyranopterin phosphate + diphosphate. The protein operates within cofactor biosynthesis; molybdopterin biosynthesis. In terms of biological role, catalyzes the conversion of (8S)-3',8-cyclo-7,8-dihydroguanosine 5'-triphosphate to cyclic pyranopterin monophosphate (cPMP). This Campylobacter jejuni subsp. doylei (strain ATCC BAA-1458 / RM4099 / 269.97) protein is Cyclic pyranopterin monophosphate synthase.